Reading from the N-terminus, the 234-residue chain is Chromatin remodeling protein EBS (234 aa).

The BAH domain maps to 29-144; it reads KVVRAGDCVL…AATGAFTPDR (116 aa). The segment at 146-197 adopts a PHD-type zinc-finger fold; that stretch reads AVYCKCEMPYNPDDLMVQCEGCKDWYHPACVGMTIEEAKKLDHFVCAECSSD.

It belongs to the SHL1/EBS protein family. Recognizes di- and trimethylated histone H3 at lysine 4 (H3K4me2 and H3K4me3). Interacts with HDA6. Expressed ubiquitously, with higher levels in floral buds.

It localises to the nucleus. Functionally, chromatin remodeling factor that binds to methylated histone (e.g. H3K4me2/3) to prevent their acetylation (e.g. H3K9K14Ac), likely by recruiting histone deacetylase (HDAC) complexes, and thus regulating the transcription of target genes. Negative regulator in developmental processes in a gibberellic acid- (GA-) dependent manner, such as germination, flowering induction, and flower organ specification, probably by modulating developmental gene expression. Involved in the chromatin-mediated repression of floral initiation and controls genes regulating flowering. Negatively regulates the expression of the floral integrator FT epigenetically, by preventing high levels of H3 acetylation, thus maintaining an inactive chromatin conformation at FT locus. The chain is Chromatin remodeling protein EBS from Arabidopsis thaliana (Mouse-ear cress).